A 275-amino-acid chain; its full sequence is MGGKMNFQSKFLTRSQSLKSLLCVGLDPDFDKLPEIVKRSPEPLVQFCKEIIDATASYAVAYKPNIAFFEVFGSSGIRQFEKVIGHLKSNYPQIPIVADVKRGDLDNTARQYAKYYFGDLQVDSLTLSPYMGLDSIRPFLEYQDYLIFWLCLTSNPDSAQFQKKRFSETGRTLYEEVVYVANLVAISNLGFVVGATSPSELETLRTQNPNRIFLIPGFGAQGAKLENLLPVCGRNSLINSSRGIHFASNGSDFAVRAGQEAEKIHKMMQTHFIGL.

Lysine 101 (proton donor) is an active-site residue.

The protein belongs to the OMP decarboxylase family. Type 2 subfamily.

It catalyses the reaction orotidine 5'-phosphate + H(+) = UMP + CO2. It participates in pyrimidine metabolism; UMP biosynthesis via de novo pathway; UMP from orotate: step 2/2. In Leptospira interrogans serogroup Icterohaemorrhagiae serovar Lai (strain 56601), this protein is Orotidine 5'-phosphate decarboxylase.